A 193-amino-acid polypeptide reads, in one-letter code: Ancillary SecYEG translocon subunit (193 aa).

Residues 1-11 (MIKNSYINEKL) are Cytoplasmic-facing. A helical transmembrane segment spans residues 12–34 (NFYQKSFLTCMLLIVIVIVYFFS). Residues 35 to 193 (KNYLDKPKNS…IIQMKINNYN (159 aa)) lie on the Extracellular side of the membrane.

Belongs to the YfgM family. As to quaternary structure, interacts with the Sec translocon. Forms a complex with PpiD.

The protein localises to the cell membrane. May mediate protein transfer from the Sec translocon to the chaperone network via its extracellular C-terminal region. This Buchnera aphidicola subsp. Baizongia pistaciae (strain Bp) protein is Ancillary SecYEG translocon subunit.